Reading from the N-terminus, the 75-residue chain is Mating pheromone Er-1/Er-3 (75 aa).

The first 19 residues, 1–19 (MNKLAILAIIAMVLFSANA), serve as a signal peptide directing secretion. The propeptide occupies 20-35 (FRFQSRLRSNVEAKTG). 3 disulfides stabilise this stretch: Cys38/Cys54, Cys45/Cys71, and Cys50/Cys63.

In terms of assembly, homodimer.

The protein localises to the secreted. Its subcellular location is the cell membrane. Functionally, mating ciliate pheromones (or gamones) are diffusible extracellular communication signals that distinguish different intraspecific classes of cells commonly referred to as 'mating types'. They prepare the latter for conjugation by changing their cell surface properties. The membrane-bound form promotes inter-cellular communication and adhesion for mating pair formation and may act as binding site for the secreted form. This is Mating pheromone Er-1/Er-3 (MAT1) from Euplotes raikovi.